The primary structure comprises 450 residues: Bifunctional protein GlmU (450 aa).

The pyrophosphorylase stretch occupies residues 1–229; it reads MRRHAIILAA…VEEIMGVNDR (229 aa). UDP-N-acetyl-alpha-D-glucosamine contacts are provided by residues 8–11, K22, Q72, and 77–78; these read LAAG and GT. Residue D102 participates in Mg(2+) binding. 3 residues coordinate UDP-N-acetyl-alpha-D-glucosamine: G139, E154, and N227. Residue N227 coordinates Mg(2+). The segment at 230–250 is linker; that stretch reads VMLSQAEKAMQRRTNHYHMLN. The N-acetyltransferase stretch occupies residues 251–450; sequence GVTIIDPDST…RQTTKEGYRK (200 aa). Residues R332 and K350 each coordinate UDP-N-acetyl-alpha-D-glucosamine. H362 (proton acceptor) is an active-site residue. Y365 and N376 together coordinate UDP-N-acetyl-alpha-D-glucosamine. Acetyl-CoA is bound by residues 385–386, A422, and R439; that span reads NY.

In the N-terminal section; belongs to the N-acetylglucosamine-1-phosphate uridyltransferase family. This sequence in the C-terminal section; belongs to the transferase hexapeptide repeat family. Homotrimer. Requires Mg(2+) as cofactor.

It is found in the cytoplasm. It catalyses the reaction alpha-D-glucosamine 1-phosphate + acetyl-CoA = N-acetyl-alpha-D-glucosamine 1-phosphate + CoA + H(+). The enzyme catalyses N-acetyl-alpha-D-glucosamine 1-phosphate + UTP + H(+) = UDP-N-acetyl-alpha-D-glucosamine + diphosphate. The protein operates within nucleotide-sugar biosynthesis; UDP-N-acetyl-alpha-D-glucosamine biosynthesis; N-acetyl-alpha-D-glucosamine 1-phosphate from alpha-D-glucosamine 6-phosphate (route II): step 2/2. Its pathway is nucleotide-sugar biosynthesis; UDP-N-acetyl-alpha-D-glucosamine biosynthesis; UDP-N-acetyl-alpha-D-glucosamine from N-acetyl-alpha-D-glucosamine 1-phosphate: step 1/1. It participates in bacterial outer membrane biogenesis; LPS lipid A biosynthesis. Catalyzes the last two sequential reactions in the de novo biosynthetic pathway for UDP-N-acetylglucosamine (UDP-GlcNAc). The C-terminal domain catalyzes the transfer of acetyl group from acetyl coenzyme A to glucosamine-1-phosphate (GlcN-1-P) to produce N-acetylglucosamine-1-phosphate (GlcNAc-1-P), which is converted into UDP-GlcNAc by the transfer of uridine 5-monophosphate (from uridine 5-triphosphate), a reaction catalyzed by the N-terminal domain. The sequence is that of Bifunctional protein GlmU from Staphylococcus aureus (strain NCTC 8325 / PS 47).